The following is a 119-amino-acid chain: Ribonuclease P protein component (119 aa).

The protein belongs to the RnpA family. As to quaternary structure, consists of a catalytic RNA component (M1 or rnpB) and a protein subunit.

It catalyses the reaction Endonucleolytic cleavage of RNA, removing 5'-extranucleotides from tRNA precursor.. RNaseP catalyzes the removal of the 5'-leader sequence from pre-tRNA to produce the mature 5'-terminus. It can also cleave other RNA substrates such as 4.5S RNA. The protein component plays an auxiliary but essential role in vivo by binding to the 5'-leader sequence and broadening the substrate specificity of the ribozyme. The sequence is that of Ribonuclease P protein component from Salmonella arizonae (strain ATCC BAA-731 / CDC346-86 / RSK2980).